The sequence spans 304 residues: MNRLAVEIPGLSLKNPIMPASGCFGFGQEYSKYYDLNELGAIMAKAVTPEPRLGNPTPRVAETASGMLNAIGLQNPGLEHVLAHELPFLEQFETPIIANVAGATEDDYVQVCARIGESKAVKAIELNISCPNVKHGGIAFGTDPEVAHRLTKAVKNVASVPVYVKLSPNVADIVSIAQAIEAAGADGLTMINTLLGMRIDLKTRKPIIANGTGGLSGPAIKPVAIRMIHQVRAVSNIPIIGMGGVQTVDDVLEFLIAGADAVAVGTMNFTDPFICPKLISELPKRMDALGISSLQDLKKERTNQ.

Residues Ser21 and 45–46 (KA) contribute to the FMN site. Residues Lys45 and 69 to 73 (NAIGL) contribute to the substrate site. FMN-binding residues include Asn99 and Asn127. Substrate is bound at residue Asn127. Catalysis depends on Cys130, which acts as the Nucleophile. Residues Lys165 and Ile191 each contribute to the FMN site. Position 192–193 (192–193 (NT)) interacts with substrate. Residues Gly217, 243 to 244 (GG), and 265 to 266 (GT) each bind FMN.

This sequence belongs to the dihydroorotate dehydrogenase family. Type 1 subfamily. Heterotetramer of 2 PyrK and 2 PyrD type B subunits. Requires FMN as cofactor.

Its subcellular location is the cytoplasm. It catalyses the reaction (S)-dihydroorotate + NAD(+) = orotate + NADH + H(+). It functions in the pathway pyrimidine metabolism; UMP biosynthesis via de novo pathway; orotate from (S)-dihydroorotate (NAD(+) route): step 1/1. Catalyzes the conversion of dihydroorotate to orotate with NAD(+) as electron acceptor. In Listeria monocytogenes serovar 1/2a (strain ATCC BAA-679 / EGD-e), this protein is Dihydroorotate dehydrogenase B (NAD(+)), catalytic subunit (pyrD).